A 143-amino-acid polypeptide reads, in one-letter code: Putative pre-16S rRNA nuclease (143 aa).

It belongs to the YqgF nuclease family.

The protein localises to the cytoplasm. In terms of biological role, could be a nuclease involved in processing of the 5'-end of pre-16S rRNA. In Agathobacter rectalis (strain ATCC 33656 / DSM 3377 / JCM 17463 / KCTC 5835 / VPI 0990) (Eubacterium rectale), this protein is Putative pre-16S rRNA nuclease.